We begin with the raw amino-acid sequence, 167 residues long: Translationally-controlled tumor protein homolog (167 aa).

The TCTP domain maps to 1 to 167 (MLIFEDVISG…WKHGVKENKI (167 aa)).

It belongs to the TCTP family.

It is found in the cytoplasm. Its subcellular location is the cytoskeleton. Its function is as follows. Involved in protein synthesis. Involved in microtubule stabilization. This Candida albicans (strain SC5314 / ATCC MYA-2876) (Yeast) protein is Translationally-controlled tumor protein homolog (TMA19).